A 241-amino-acid polypeptide reads, in one-letter code: Pyridoxal phosphate phosphatase PHOSPHO2 (241 aa).

D8 serves as the catalytic Nucleophile. Positions 8 and 10 each coordinate Mg(2+). Catalysis depends on D10, which acts as the Proton donor. The substrate site is built by D19 and D99. D179 contributes to the Mg(2+) binding site.

The protein belongs to the HAD-like hydrolase superfamily. PHOSPHO family. It depends on Mg(2+) as a cofactor.

The catalysed reaction is pyridoxal 5'-phosphate + H2O = pyridoxal + phosphate. In terms of biological role, phosphatase that has high activity toward pyridoxal 5'-phosphate (PLP). Also active at much lower level toward pyrophosphate, phosphoethanolamine (PEA), phosphocholine (PCho), phospho-l-tyrosine, fructose-6-phosphate, p-nitrophenyl phosphate, and h-glycerophosphate. The chain is Pyridoxal phosphate phosphatase PHOSPHO2 (Phospho2) from Mus musculus (Mouse).